Consider the following 385-residue polypeptide: Lipid-A-disaccharide synthase 2 (385 aa).

This sequence belongs to the LpxB family.

The catalysed reaction is a lipid X + a UDP-2-N,3-O-bis[(3R)-3-hydroxyacyl]-alpha-D-glucosamine = a lipid A disaccharide + UDP + H(+). Its pathway is bacterial outer membrane biogenesis; LPS lipid A biosynthesis. Condensation of UDP-2,3-diacylglucosamine and 2,3-diacylglucosamine-1-phosphate to form lipid A disaccharide, a precursor of lipid A, a phosphorylated glycolipid that anchors the lipopolysaccharide to the outer membrane of the cell. The chain is Lipid-A-disaccharide synthase 2 from Legionella pneumophila subsp. pneumophila (strain Philadelphia 1 / ATCC 33152 / DSM 7513).